The primary structure comprises 730 residues: Kinesin-like protein KIF2C (730 aa).

Residues 1 to 256 (MERLVATRLV…MDCHRISMAD (256 aa)) are globular. The interval 79–98 (NMPPQRNVSSQNHKRKTISK) is disordered. A negative regulator of microtubule-binding region spans residues 211 to 242 (EQRAQNYERRMKRAQDYDTSVPNWEFGKMIKE). The Kinesin motor domain occupies 262–592 (RICVCVRKRP…LRYADRVKEL (331 aa)). ATP contacts are provided by residues arginine 268 and 352-359 (GQTGSGKT). The stretch at 599–730 (TNDDNLQMED…QISKKKRSNK (132 aa)) forms a coiled coil.

The protein belongs to the TRAFAC class myosin-kinesin ATPase superfamily. Kinesin family. MCAK/KIF2 subfamily.

The protein localises to the cytoplasm. It localises to the cytoskeleton. It is found in the nucleus. The protein resides in the chromosome. Its subcellular location is the centromere. The protein localises to the kinetochore. In terms of biological role, promotes ATP-dependent removal of tubulin dimers from microtubules. Regulates the turnover of microtubules at the kinetochore and functions in chromosome segregation during mitosis. May play a role in chromosome congression and may be required for the lateral to end-on conversion of the chromosome-microtubule attachment. The chain is Kinesin-like protein KIF2C (kif2c) from Xenopus laevis (African clawed frog).